Reading from the N-terminus, the 982-residue chain is E3 ubiquitin-protein ligase CBL-B (982 aa).

The interval 35-167 (PPKQAAADRR…KAIFPNGQFQ (133 aa)) is 4H. A Cbl-PTB domain is found at 35–343 (PPKQAAADRR…GRSYNPDLTG (309 aa)). Residues 168–240 (GDNFRITKAD…FEFDIFTRLF (73 aa)) are EF-hand-like. Ca(2+) is bound by residues Asp221, Thr223, Asn225, Tyr227, and Glu232. The tract at residues 241-343 (QPWGSILRNW…GRSYNPDLTG (103 aa)) is SH2-like. The residue at position 282 (Ser282) is a Phosphoserine; by PKC/PRKCQ. A 4-O-phospho-L-tyrosine-binding site is contributed by Arg286. Residues 344-372 (LCEPTPHDHIKVTQEQYELYCEMGSTFQL) are linker. A Phosphotyrosine modification is found at Tyr363. Residues 373 to 412 (CKICAENDKDVKIEPCGHLMCTSCLTAWQESDGQGCPFCR) form an RING-type zinc finger. A disordered region spans residues 466 to 571 (NVRKCTDRQN…PPPIPPDNRL (106 aa)). Over residues 473-486 (RQNSPVTSPGSSPL) the composition is skewed to polar residues. Ser476, Ser480, Ser484, Ser521, Ser525, and Ser529 each carry phosphoserine. The interaction with VAV1 stretch occupies residues 543-568 (PLPAPPPPLRDPPPPPPERPPPIPPD). Positions 544–567 (LPAPPPPLRDPPPPPPERPPPIPP) are enriched in pro residues. Phosphoserine is present on Ser634. Tyr665 and Tyr709 each carry phosphotyrosine. Disordered regions lie at residues 688–731 (GPLA…NVKP) and 769–929 (FDSA…EAAL). Over residues 715–725 (HPVSLNSQPSH) the composition is skewed to polar residues. Pro residues predominate over residues 819–828 (PSLPPPPPPA). Over residues 838 to 848 (PPGSSSRPSSG) the composition is skewed to low complexity. The span at 880–899 (VKTNRTSQDYDQLPSCSDGS) shows a compositional bias: polar residues. Tyr889 is subject to Phosphotyrosine. Positions 891–927 (QLPSCSDGSQAPARPPKPRPRRTAPEIHHRKPHGPEA) are interaction with SH3KBP1. Residues 906 to 922 (PKPRPRRTAPEIHHRKP) show a composition bias toward basic residues. In terms of domain architecture, UBA spans 931-970 (NVDAKIAKLMGEGYAFEEVKRALEIAQNNVEVARSILREF).

In terms of assembly, interacts with SH3 domain-containing proteins LCK, CRK and SORBS1. Interacts with LCP2 and ZAP70. Interacts with CBL. Interacts with SH3 domain-containing proteins VAV1, FYN, FGR, PLCG1, GRB2, CRKL, PIK3R1 and SH3KBP1/CIN85. Identified in heterotrimeric complexes with SH3KBP1/CIN85, CD2AP and ARHGEF7, where one CBLB peptide binds two copies of the other protein. Interacts with poly-ubiquitinated proteins. Dimerization is required for the binding of poly-ubiquitin, but not for the binding of mono-ubiquitin. Interacts with EGFR (phosphorylated). Interacts with IFT20. Post-translationally, phosphorylated on tyrosine and serine residues upon TCR or BCR activation, and upon various types of cell stimulation. Auto-ubiquitinated upon EGF-mediated cell activation or upon T-cell costimulation by CD28; which promotes proteasomal degradation. As to expression, expressed in placenta, heart, lung, kidney, spleen, ovary and testis, as well as fetal brain and liver and hematopoietic cell lines, but not in adult brain, liver, pancreas, salivary gland, or skeletal muscle. Present in lymphocytes (at protein level).

It is found in the cytoplasm. The enzyme catalyses S-ubiquitinyl-[E2 ubiquitin-conjugating enzyme]-L-cysteine + [acceptor protein]-L-lysine = [E2 ubiquitin-conjugating enzyme]-L-cysteine + N(6)-ubiquitinyl-[acceptor protein]-L-lysine.. It participates in protein modification; protein ubiquitination. Its function is as follows. E3 ubiquitin-protein ligase which accepts ubiquitin from specific E2 ubiquitin-conjugating enzymes, and transfers it to substrates, generally promoting their degradation by the proteasome. Negatively regulates TCR (T-cell receptor), BCR (B-cell receptor) and FCER1 (high affinity immunoglobulin epsilon receptor) signal transduction pathways. In naive T-cells, inhibits VAV1 activation upon TCR engagement and imposes a requirement for CD28 costimulation for proliferation and IL-2 production. Also acts by promoting PIK3R1/p85 ubiquitination, which impairs its recruitment to the TCR and subsequent activation. In activated T-cells, inhibits PLCG1 activation and calcium mobilization upon restimulation and promotes anergy. In B-cells, acts by ubiquitinating SYK and promoting its proteasomal degradation. Slightly promotes SRC ubiquitination. May be involved in EGFR ubiquitination and internalization. May be functionally coupled with the E2 ubiquitin-protein ligase UB2D3. In association with CBL, required for proper feedback inhibition of ciliary platelet-derived growth factor receptor-alpha (PDGFRA) signaling pathway via ubiquitination and internalization of PDGFRA. The protein is E3 ubiquitin-protein ligase CBL-B (CBLB) of Homo sapiens (Human).